The chain runs to 254 residues: Phosphoribosylaminoimidazole-succinocarboxamide synthase (254 aa).

Belongs to the SAICAR synthetase family.

The enzyme catalyses 5-amino-1-(5-phospho-D-ribosyl)imidazole-4-carboxylate + L-aspartate + ATP = (2S)-2-[5-amino-1-(5-phospho-beta-D-ribosyl)imidazole-4-carboxamido]succinate + ADP + phosphate + 2 H(+). It participates in purine metabolism; IMP biosynthesis via de novo pathway; 5-amino-1-(5-phospho-D-ribosyl)imidazole-4-carboxamide from 5-amino-1-(5-phospho-D-ribosyl)imidazole-4-carboxylate: step 1/2. The chain is Phosphoribosylaminoimidazole-succinocarboxamide synthase from Sinorhizobium medicae (strain WSM419) (Ensifer medicae).